The following is an 825-amino-acid chain: Putative NAD(+)--arginine ADP-ribosyltransferase Mav (825 aa).

A disordered region spans residues 435-673 (ALKGLKKPPG…SGSDHHLPLH (239 aa)). Pro residues-rich tracts occupy residues 443–457 (PGVPKPPEVKPPAAP) and 468–491 (SGKPGPVAPSGKPAPGPADGPLPH). Positions 560–579 (PAADTPAPSAPAASMSAASG) are enriched in low complexity. Pro residues predominate over residues 580 to 589 (PPMPPTPSLP). A compositionally biased stretch (low complexity) spans 590–599 (EPASLPSGPS). A TR mART core domain is found at 650–825 (KNANGHGPHD…GRTIIEMIER (176 aa)). Positions 656–670 (GPHDASLDSGSDHHL) are enriched in basic and acidic residues. Residues 687–699 (TGPGYQELNFALR), 730–733 (RGTN), and Glu750 each bind NAD(+). The active site involves Arg730. Active-site residues include Ser755 and Glu795. Position 795 (Glu795) interacts with NAD(+).

This sequence belongs to the Arg-specific ADP-ribosyltransferase family.

The protein localises to the secreted. It carries out the reaction L-arginyl-[protein] + NAD(+) = N(omega)-(ADP-D-ribosyl)-L-arginyl-[protein] + nicotinamide + H(+). Functionally, a probable mono(ADP-ribosyl)transferase, it may ADP-ribosylate Arg in target protein(s). This chain is Putative NAD(+)--arginine ADP-ribosyltransferase Mav, found in Mycobacterium avium (strain 104).